Consider the following 929-residue polypeptide: MLGPHLPPPPLAPSEGRPTPCAFQIPDGSYRCLALEAEESSGEEGLQGEVGPTDLEEDEGVSRSGDDSACRVTQGTPQLPKALGIQPPSCSREEQGASQHDDRASQDWDVVKAGQMMTASPSPGPGPRVAQKPALGRSTSLTEKDLKEAKARSQQIAAQLTTPPSSNSRGVQLFNRRRQRVNEFTLESHGQRGQKPSQESLRVLPSSLPGHAPGLSLSSTSLPEPGPPRHPSPQSPDRGVPGHSMEGYSEEASLLRHLEKVASEEEEVPLVVYLKENAALLTANGLHLSQNREAQQSSPAPPPAEVHSPAADVNQNLASPSATLTTPTSNSSHNPPATDVNQNPPATVVPQSLPLSSIQQNSSEAQLPSNGTGPASKPSTLCADGQPQAPAEEVRCSTLLIDKVSTPATTTSTFSREATLIPSSRPPASDFMSSSLLIDIQPNTLVVSADQEMSGRAAATTPTKVYSEVHFTLAKPPSVVNRTARPFGIQAPGGTSQMERSPMLERRHFGEKAPAPQPPSLPDRSPRPQRHIMSRSPMVERRMMGQRSPASERRPLGNFTAPPTYTETLSTAPLASWVRSPPSYSVLYPSSDPKSSHLKGQAVPASKTGILEESMARRGSRKSMFTFVEKPKVTPNPDLLDLVQTADEKRRQRDQGEVGVEEEPFALGAEASNFQQEPAPRDRASPAAAEEVVPEWASCLKSPRIQAKPKPKPNQNLSEASGKGAELYARRQSRMEKYVIESSSHTPELARCPSPTMSLPSSWKYPTNAPGAFRVASRSPARTPPASLYHGYLPENGVLRPEPTKQPPYQLRPSLFVLSPIKEPAKVSPRAASPAKPSSLDLVPNLPKGALPPSPALPRPSRSSPGLYTSPGQDSLQPTAVSPPYGGDISPVSPSRAWSPRAKQAPRPSFSTRNAGIEAQVWKPSFCFK.

Met1 carries the post-translational modification N-acetylmethionine. Positions 1–12 (MLGPHLPPPPLA) are enriched in pro residues. The disordered stretch occupies residues 1-260 (MLGPHLPPPP…EASLLRHLEK (260 aa)). 2 stretches are compositionally biased toward basic and acidic residues: residues 60 to 69 (GVSRSGDDSA) and 91 to 110 (SREE…DWDV). Ser140 carries the post-translational modification Phosphoserine. Basic and acidic residues predominate over residues 142 to 151 (TEKDLKEAKA). A compositionally biased stretch (polar residues) spans 152 to 170 (RSQQIAAQLTTPPSSNSRG). Ser207 is subject to Phosphoserine. Over residues 224–234 (EPGPPRHPSPQ) the composition is skewed to pro residues. Position 263 is a phosphoserine (Ser263). A disordered region spans residues 285–389 (GLHLSQNREA…TLCADGQPQA (105 aa)). Residues 317–332 (LASPSATLTTPTSNSS) show a composition bias toward low complexity. Residue Asn330 is glycosylated (N-linked (GlcNAc...) asparagine). Polar residues predominate over residues 333–379 (HNPPATDVNQNPPATVVPQSLPLSSIQQNSSEAQLPSNGTGPASKPS). Residues Ser501 and Ser525 each carry the phosphoserine modification. Residues 509–558 (FGEKAPAPQPPSLPDRSPRPQRHIMSRSPMVERRMMGQRSPASERRPLGN) are disordered. A Phosphothreonine modification is found at Thr560. Positions 562–565 (PPTY) match the PPxY motif motif. Ser580 is modified (phosphoserine). The PPxY motif signature appears at 581-584 (PPSY). Disordered regions lie at residues 589–610 (PSSD…KTGI) and 630–726 (KPKV…KGAE). Positions 646 to 656 (ADEKRRQRDQG) are enriched in basic and acidic residues. Residues Ser685, Ser702, and Tyr738 each carry the phosphoserine modification. The span at 685 to 698 (SPAAAEEVVPEWAS) shows a compositional bias: low complexity. The tract at residues 740-763 (IESSSHTPELARCPSPTMSLPSSW) is disordered. Position 746 is a phosphothreonine (Thr746). A phosphoserine mark is found at Ser754, Ser758, and Ser779. Thr783 is subject to Phosphothreonine. 8 positions are modified to phosphoserine: Pro784, Thr804, Arg812, Lys826, Ser833, Ser854, Pro871, and Pro894. Over residues 826–839 (KVSPRAASPAKPSS) the composition is skewed to low complexity. Residues 826 to 916 (KVSPRAASPA…RPSFSTRNAG (91 aa)) are disordered. Polar residues predominate over residues 866–880 (GLYTSPGQDSLQPTA).

The protein belongs to the synaptopodin family. As to quaternary structure, interacts with BAIAP1. Interacts with actin. Interacts (via PPxY motifs) with WWC1 (via WW domains). In terms of processing, O-glycosylated. Expressed in cerebral cortex.

It localises to the cytoplasm. The protein resides in the cytoskeleton. The protein localises to the cell junction. It is found in the tight junction. Its subcellular location is the perikaryon. It localises to the cell projection. The protein resides in the dendritic spine. The protein localises to the postsynaptic density. It is found in the synapse. Its subcellular location is the cytosol. In terms of biological role, actin-associated protein that may play a role in modulating actin-based shape and motility of dendritic spines and renal podocyte foot processes. Seems to be essential for the formation of spine apparatuses in spines of telencephalic neurons, which is involved in synaptic plasticity. The protein is Synaptopodin (SYNPO) of Homo sapiens (Human).